Reading from the N-terminus, the 421-residue chain is Type II methyltransferase M.TaqI (421 aa).

Positions 1-18 (MGLPPLLSLPSNSAPRSL) are enriched in low complexity. The segment at 1–20 (MGLPPLLSLPSNSAPRSLGR) is disordered. S-adenosyl-L-methionine is bound by residues T23, 45-48 (EPAC), E71, D89, and P107.

Belongs to the N(4)/N(6)-methyltransferase family.

The catalysed reaction is a 2'-deoxyadenosine in DNA + S-adenosyl-L-methionine = an N(6)-methyl-2'-deoxyadenosine in DNA + S-adenosyl-L-homocysteine + H(+). In terms of biological role, a gamma subtype methylase that recognizes the double-stranded sequence 5'-TCGA-3', methylates A-4 on both strands and protects the DNA from cleavage by the TaqI endonuclease. The polypeptide is Type II methyltransferase M.TaqI (taqIM) (Thermus aquaticus).